The chain runs to 98 residues: NADH-ubiquinone oxidoreductase chain 4L (98 aa).

The next 3 membrane-spanning stretches (helical) occupy residues 1–21 (MSLIHINIFLAFTVSLMGLLM), 29–49 (SLLCLEGMMLSLFIMATMMVL), and 61–81 (IILLVFAACEAALGLSLLVMI).

It belongs to the complex I subunit 4L family. As to quaternary structure, core subunit of respiratory chain NADH dehydrogenase (Complex I) which is composed of 45 different subunits.

Its subcellular location is the mitochondrion inner membrane. It catalyses the reaction a ubiquinone + NADH + 5 H(+)(in) = a ubiquinol + NAD(+) + 4 H(+)(out). In terms of biological role, core subunit of the mitochondrial membrane respiratory chain NADH dehydrogenase (Complex I) which catalyzes electron transfer from NADH through the respiratory chain, using ubiquinone as an electron acceptor. Part of the enzyme membrane arm which is embedded in the lipid bilayer and involved in proton translocation. This is NADH-ubiquinone oxidoreductase chain 4L (MT-ND4L) from Rhinoceros unicornis (Greater Indian rhinoceros).